The primary structure comprises 253 residues: Small ribosomal subunit protein uS3 (253 aa).

The KH type-2 domain occupies 39-109; sequence IRNYVLARLK…EVKIDVVEVI (71 aa). Positions 220-253 are disordered; sequence DEMKKMKDRRNDGGAKGRDSRDNRSKRRSRSKRS. Residues 221-242 show a composition bias toward basic and acidic residues; it reads EMKKMKDRRNDGGAKGRDSRDN. Basic residues predominate over residues 243-253; sequence RSKRRSRSKRS.

The protein belongs to the universal ribosomal protein uS3 family. Part of the 30S ribosomal subunit. Forms a tight complex with proteins S10 and S14.

In terms of biological role, binds the lower part of the 30S subunit head. Binds mRNA in the 70S ribosome, positioning it for translation. In Chlorobium chlorochromatii (strain CaD3), this protein is Small ribosomal subunit protein uS3.